Reading from the N-terminus, the 151-residue chain is uncharacterized protein (151 aa).

This sequence to M.jannaschii MJ1244 and MJ1245.

This is an uncharacterized protein from Methanothermobacter thermautotrophicus (strain ATCC 29096 / DSM 1053 / JCM 10044 / NBRC 100330 / Delta H) (Methanobacterium thermoautotrophicum).